The chain runs to 508 residues: Photosystem II CP47 reaction center protein (508 aa).

6 consecutive transmembrane segments (helical) span residues 21 to 36 (AVHIMHTALVSGWAGS), 101 to 115 (IVFSGLCFLAAIWHW), 140 to 156 (GIHLFLSGAACFGFGAF), 203 to 218 (IAAGILGILAGLFHLS), 237 to 252 (VLSSSIAAVFFAAFIV), and 457 to 472 (TFALLFFFGHIWHGAR).

It belongs to the PsbB/PsbC family. PsbB subfamily. In terms of assembly, PSII is composed of 1 copy each of membrane proteins PsbA, PsbB, PsbC, PsbD, PsbE, PsbF, PsbH, PsbI, PsbJ, PsbK, PsbL, PsbM, PsbT, PsbX, PsbY, PsbZ, Psb30/Ycf12, at least 3 peripheral proteins of the oxygen-evolving complex and a large number of cofactors. It forms dimeric complexes. Binds multiple chlorophylls. PSII binds additional chlorophylls, carotenoids and specific lipids. serves as cofactor.

Its subcellular location is the plastid. The protein localises to the chloroplast thylakoid membrane. Its function is as follows. One of the components of the core complex of photosystem II (PSII). It binds chlorophyll and helps catalyze the primary light-induced photochemical processes of PSII. PSII is a light-driven water:plastoquinone oxidoreductase, using light energy to abstract electrons from H(2)O, generating O(2) and a proton gradient subsequently used for ATP formation. This chain is Photosystem II CP47 reaction center protein, found in Cryptomeria japonica (Japanese cedar).